We begin with the raw amino-acid sequence, 218 residues long: Small ribosomal subunit protein uS3 (218 aa).

Residues 38-106 enclose the KH type-2 domain; sequence IREYISKRLS…RVHINILEIK (69 aa).

Belongs to the universal ribosomal protein uS3 family. As to quaternary structure, part of the 30S ribosomal subunit. Forms a tight complex with proteins S10 and S14.

In terms of biological role, binds the lower part of the 30S subunit head. Binds mRNA in the 70S ribosome, positioning it for translation. This chain is Small ribosomal subunit protein uS3, found in Bacillus subtilis (strain 168).